Consider the following 361-residue polypeptide: Membrane cofactor protein (361 aa).

The N-terminal stretch at 1–42 (MRASCTPLKAPLRRPERLASSGRFAWVLLLAPLLLLPTSSDA) is a signal peptide. Sushi domains lie at 43–104 (CDDP…GCKK), 105–168 (RRCP…TCEK), 169–234 (ILCQ…QCKV), and 235–294 (VKCV…KCIK). Topologically, residues 43–311 (CDDPPRFVSM…DASPPNGAEG (269 aa)) are extracellular. Cystine bridges form between Cys107–Cys149, Cys135–Cys166, Cys171–Cys219, Cys200–Cys232, Cys237–Cys279, and Cys265–Cys292. Asn122 and Asn145 each carry an N-linked (GlcNAc...) asparagine glycan. Thr301 carries an O-linked (GalNAc...) threonine glycan. Residues 312–332 (LGAGYIVLVIVAVLIGVGLLL) traverse the membrane as a helical segment. The Cytoplasmic segment spans residues 333 to 361 (CLYCCFCRQRKKGIYVTGESHRQDILFSL). Phosphotyrosine is present on residues His353 and Asp356.

In terms of assembly, interacts with C3b. Interacts with C4b. Interacts with moesin/MSN. In terms of processing, N-glycosylated. As to expression, highly expressed at the blood-brain barrier. Broadly expressed, with highest levels in thymus and spleen (at protein level).

The protein resides in the cytoplasmic vesicle. Its subcellular location is the secretory vesicle. It localises to the acrosome inner membrane. Functionally, acts as a cofactor for complement factor I, a serine protease which protects autologous cells against complement-mediated injury by cleaving C3b and C4b deposited on host tissue. May be involved in the fusion of the spermatozoa with the oocyte during fertilization. May act as a costimulatory factor for T-cells which induces the differentiation of CD4+ into T-regulatory 1 cells. T-regulatory 1 cells suppress immune responses by secreting interleukin-10, and therefore are thought to prevent autoimmunity. In case of bovine viral diarrhea virus (BVDV) infection, involved in virus attachment to cells. The protein is Membrane cofactor protein (CD46) of Bos taurus (Bovine).